Consider the following 345-residue polypeptide: Sesquiterpene synthase GALMADRAFT_104215 (345 aa).

Residues D91, N226, S230, and E234 each coordinate Mg(2+). The short motif at 91-95 is the DDXXD motif element; it reads DEFTD. (2E,6E)-farnesyl diphosphate contacts are provided by R316 and Y317.

This sequence belongs to the terpene synthase family. Mg(2+) is required as a cofactor.

It catalyses the reaction (2E,6E)-farnesyl diphosphate = beta-gurjunene + diphosphate. Terpene cyclase that catalyzes the cyclization of farnesyl diphosphate (FPP) to beta-gurjunene. This Galerina marginata (strain CBS 339.88) protein is Sesquiterpene synthase GALMADRAFT_104215.